The sequence spans 256 residues: Hydroxyacylglutathione hydrolase (256 aa).

Zn(2+) contacts are provided by His53, His55, Asp57, His58, His113, Asp130, and His168.

It belongs to the metallo-beta-lactamase superfamily. Glyoxalase II family. As to quaternary structure, monomer. Requires Zn(2+) as cofactor.

The catalysed reaction is an S-(2-hydroxyacyl)glutathione + H2O = a 2-hydroxy carboxylate + glutathione + H(+). It functions in the pathway secondary metabolite metabolism; methylglyoxal degradation; (R)-lactate from methylglyoxal: step 2/2. Thiolesterase that catalyzes the hydrolysis of S-D-lactoyl-glutathione to form glutathione and D-lactic acid. This Tolumonas auensis (strain DSM 9187 / NBRC 110442 / TA 4) protein is Hydroxyacylglutathione hydrolase.